The sequence spans 229 residues: Potassium/proton antiporter CemA (229 aa).

A run of 3 helical transmembrane segments spans residues 7–27 (FTPLLYLVSIVFLPWWISLLF), 107–127 (ILHFSTNIICFIILSGYSILG), and 189–209 (IISGLVSTFPVILDTILKYWI).

It belongs to the CemA family.

It is found in the plastid. Its subcellular location is the chloroplast inner membrane. It carries out the reaction K(+)(in) + H(+)(out) = K(+)(out) + H(+)(in). Functionally, contributes to K(+)/H(+) antiport activity by supporting proton efflux to control proton extrusion and homeostasis in chloroplasts in a light-dependent manner to modulate photosynthesis. Prevents excessive induction of non-photochemical quenching (NPQ) under continuous-light conditions. Indirectly promotes efficient inorganic carbon uptake into chloroplasts. The sequence is that of Potassium/proton antiporter CemA from Helianthus annuus (Common sunflower).